Consider the following 785-residue polypeptide: Penicillin-binding protein 1A (785 aa).

Residues 1-6 (MYKSLF) are Cytoplasmic-facing. The helical; Signal-anchor for type II membrane protein transmembrane segment at 7–27 (FFLKIFAILILLGCSVTAYII) threads the bilayer. Residues 28 to 785 (YHYSHDLPDY…GISDQSQEIY (758 aa)) are Periplasmic-facing. Positions 49–220 (TRIYSRDGKL…SELNPDKNYS (172 aa)) are transglycosylase. Residue Glu87 is the Proton donor; for transglycosylase activity of the active site. The transpeptidase stretch occupies residues 398–711 (DVIVVEPIKD…SNVVLPIFID (314 aa)). Ser457 acts as the Acyl-ester intermediate; for transpeptidase activity in catalysis.

In the N-terminal section; belongs to the glycosyltransferase 51 family. This sequence in the C-terminal section; belongs to the transpeptidase family.

The protein resides in the cell inner membrane. It carries out the reaction [GlcNAc-(1-&gt;4)-Mur2Ac(oyl-L-Ala-gamma-D-Glu-L-Lys-D-Ala-D-Ala)](n)-di-trans,octa-cis-undecaprenyl diphosphate + beta-D-GlcNAc-(1-&gt;4)-Mur2Ac(oyl-L-Ala-gamma-D-Glu-L-Lys-D-Ala-D-Ala)-di-trans,octa-cis-undecaprenyl diphosphate = [GlcNAc-(1-&gt;4)-Mur2Ac(oyl-L-Ala-gamma-D-Glu-L-Lys-D-Ala-D-Ala)](n+1)-di-trans,octa-cis-undecaprenyl diphosphate + di-trans,octa-cis-undecaprenyl diphosphate + H(+). The catalysed reaction is Preferential cleavage: (Ac)2-L-Lys-D-Ala-|-D-Ala. Also transpeptidation of peptidyl-alanyl moieties that are N-acyl substituents of D-alanine.. The protein operates within cell wall biogenesis; peptidoglycan biosynthesis. In terms of biological role, cell wall formation. Synthesis of cross-linked peptidoglycan from the lipid intermediates. The enzyme has a penicillin-insensitive transglycosylase N-terminal domain (formation of linear glycan strands) and a penicillin-sensitive transpeptidase C-terminal domain (cross-linking of the peptide subunits). This Rickettsia typhi (strain ATCC VR-144 / Wilmington) protein is Penicillin-binding protein 1A (mrcA).